The chain runs to 52 residues: Large ribosomal subunit protein bL32c (52 aa).

Belongs to the bacterial ribosomal protein bL32 family.

The protein resides in the plastid. The protein localises to the chloroplast. This is Large ribosomal subunit protein bL32c from Eucalyptus globulus subsp. globulus (Tasmanian blue gum).